The primary structure comprises 193 residues: LOB domain-containing protein 12 (193 aa).

An LOB domain is found at 7 to 108; the sequence is SPCASCKLLR…MQLAVAQAEI (102 aa).

This sequence belongs to the LOB domain-containing protein family. In terms of tissue distribution, expressed predominantly in roots, and at low levels in shoots, floral stems and open flowers.

The polypeptide is LOB domain-containing protein 12 (LBD12) (Arabidopsis thaliana (Mouse-ear cress)).